Consider the following 728-residue polypeptide: Fatty acid oxidation complex subunit alpha (728 aa).

Residues 1–189 (MLYQSETIQV…KNGLIDAVVP (189 aa)) form an enoyl-CoA hydratase/isomerase region. Aspartate 296 contacts substrate. The segment at 311 to 728 (TIPEYAAVLG…TIAVSTGKTA (418 aa)) is 3-hydroxyacyl-CoA dehydrogenase. NAD(+)-binding positions include methionine 324, aspartate 343, 400-402 (VVE), lysine 407, and serine 429. Histidine 450 serves as the catalytic For 3-hydroxyacyl-CoA dehydrogenase activity. Asparagine 453 is an NAD(+) binding site. Residues asparagine 500 and tyrosine 660 each contribute to the substrate site.

The protein in the N-terminal section; belongs to the enoyl-CoA hydratase/isomerase family. In the C-terminal section; belongs to the 3-hydroxyacyl-CoA dehydrogenase family. In terms of assembly, heterotetramer of two alpha chains (FadB) and two beta chains (FadA).

The enzyme catalyses a (3S)-3-hydroxyacyl-CoA + NAD(+) = a 3-oxoacyl-CoA + NADH + H(+). The catalysed reaction is a (3S)-3-hydroxyacyl-CoA = a (2E)-enoyl-CoA + H2O. It catalyses the reaction a 4-saturated-(3S)-3-hydroxyacyl-CoA = a (3E)-enoyl-CoA + H2O. It carries out the reaction (3S)-3-hydroxybutanoyl-CoA = (3R)-3-hydroxybutanoyl-CoA. The enzyme catalyses a (3Z)-enoyl-CoA = a 4-saturated (2E)-enoyl-CoA. The catalysed reaction is a (3E)-enoyl-CoA = a 4-saturated (2E)-enoyl-CoA. Its pathway is lipid metabolism; fatty acid beta-oxidation. Functionally, involved in the aerobic and anaerobic degradation of long-chain fatty acids via beta-oxidation cycle. Catalyzes the formation of 3-oxoacyl-CoA from enoyl-CoA via L-3-hydroxyacyl-CoA. It can also use D-3-hydroxyacyl-CoA and cis-3-enoyl-CoA as substrate. The polypeptide is Fatty acid oxidation complex subunit alpha (Photorhabdus laumondii subsp. laumondii (strain DSM 15139 / CIP 105565 / TT01) (Photorhabdus luminescens subsp. laumondii)).